Here is a 531-residue protein sequence, read N- to C-terminus: Probable bifunctional methylthioribulose-1-phosphate dehydratase/enolase-phosphatase E1 2 (531 aa).

Positions methionine 1–aspartate 248 are methylthioribulose-1-phosphate dehydratase. Position 120 (cysteine 120) interacts with substrate. Zn(2+) is bound by residues histidine 138 and histidine 140. Glutamate 163 acts as the Proton donor/acceptor; for methylthioribulose-1-phosphate dehydratase activity in catalysis. Histidine 213 provides a ligand contact to Zn(2+). The tract at residues isoleucine 292–isoleucine 531 is enolase-phosphatase E1. Residues aspartate 295 and glutamate 297 each contribute to the Mg(2+) site. Residues serine 430–serine 431 and lysine 464 each bind substrate. Residue aspartate 490 participates in Mg(2+) binding.

It in the N-terminal section; belongs to the aldolase class II family. MtnB subfamily. In the C-terminal section; belongs to the HAD-like hydrolase superfamily. MasA/MtnC family. Zn(2+) is required as a cofactor. It depends on Mg(2+) as a cofactor.

It carries out the reaction 5-(methylsulfanyl)-D-ribulose 1-phosphate = 5-methylsulfanyl-2,3-dioxopentyl phosphate + H2O. The catalysed reaction is 5-methylsulfanyl-2,3-dioxopentyl phosphate + H2O = 1,2-dihydroxy-5-(methylsulfanyl)pent-1-en-3-one + phosphate. It participates in amino-acid biosynthesis; L-methionine biosynthesis via salvage pathway; L-methionine from S-methyl-5-thio-alpha-D-ribose 1-phosphate: step 2/6. It functions in the pathway amino-acid biosynthesis; L-methionine biosynthesis via salvage pathway; L-methionine from S-methyl-5-thio-alpha-D-ribose 1-phosphate: step 3/6. The protein operates within amino-acid biosynthesis; L-methionine biosynthesis via salvage pathway; L-methionine from S-methyl-5-thio-alpha-D-ribose 1-phosphate: step 4/6. The chain is Probable bifunctional methylthioribulose-1-phosphate dehydratase/enolase-phosphatase E1 2 from Vitis vinifera (Grape).